The primary structure comprises 634 residues: Factor of DNA methylation 5 (634 aa).

Residues 254–469 (IVVDDLANKI…EDTNSALMVK (216 aa)) are a coiled coil.

Its function is as follows. Acts in association with FDM3 and FDM4 for RNA-directed DNA methylation (RdDM). The sequence is that of Factor of DNA methylation 5 from Arabidopsis thaliana (Mouse-ear cress).